A 148-amino-acid chain; its full sequence is Large ribosomal subunit protein bL9 (148 aa).

Belongs to the bacterial ribosomal protein bL9 family.

Binds to the 23S rRNA. The polypeptide is Large ribosomal subunit protein bL9 (Chloroflexus aurantiacus (strain ATCC 29366 / DSM 635 / J-10-fl)).